Consider the following 235-residue polypeptide: Elongation factor Tu, chloroplastic (235 aa).

Residues 1–125 form the tr-type G domain; sequence KNMITGAAQM…SVDSYIPTPI (125 aa). 47-50 lines the GTP pocket; it reads NKED.

This sequence belongs to the TRAFAC class translation factor GTPase superfamily. Classic translation factor GTPase family. EF-Tu/EF-1A subfamily.

The protein resides in the plastid. It is found in the chloroplast. The catalysed reaction is GTP + H2O = GDP + phosphate + H(+). Its function is as follows. GTP hydrolase that promotes the GTP-dependent binding of aminoacyl-tRNA to the A-site of ribosomes during protein biosynthesis. The sequence is that of Elongation factor Tu, chloroplastic (tufA) from Costaria costata (Five-ribbed kelp).